The sequence spans 183 residues: Large ribosomal subunit protein uL5 (183 aa).

It belongs to the universal ribosomal protein uL5 family. Part of the 50S ribosomal subunit; part of the 5S rRNA/L5/L18/L25 subcomplex. Contacts the 5S rRNA and the P site tRNA. Forms a bridge to the 30S subunit in the 70S ribosome.

Functionally, this is one of the proteins that bind and probably mediate the attachment of the 5S RNA into the large ribosomal subunit, where it forms part of the central protuberance. In the 70S ribosome it contacts protein S13 of the 30S subunit (bridge B1b), connecting the 2 subunits; this bridge is implicated in subunit movement. Contacts the P site tRNA; the 5S rRNA and some of its associated proteins might help stabilize positioning of ribosome-bound tRNAs. This is Large ribosomal subunit protein uL5 from Corynebacterium aurimucosum (strain ATCC 700975 / DSM 44827 / CIP 107346 / CN-1) (Corynebacterium nigricans).